The chain runs to 419 residues: Phospho-N-acetylmuramoyl-pentapeptide-transferase (419 aa).

The next 10 membrane-spanning stretches (helical) occupy residues 22 to 42 (YVSFRSAVAIILALLLATVIG), 72 to 92 (TPTMGGLIIIISILIPTLLLA), 99 to 119 (ILLMIVTTLLLGSLGFLDDYI), 135 to 155 (IIGQVGLGFIIGIVLYMNPAV), 208 to 228 (VLFGWILFVCVAVVVVTFISN), 238 to 258 (GLATGSSAIIGVVLAIFAYVS), 278 to 298 (LTIFAFAFVGATIGFLWYNAY), 303 to 323 (FMGDTGSLTLGGIIAVFALII), 328 to 348 (LLPILCFVFIIEGLSVMIQVF), and 396 to 416 (KITVRFWLVGIIMAAITIATL).

It belongs to the glycosyltransferase 4 family. MraY subfamily. It depends on Mg(2+) as a cofactor.

Its subcellular location is the cell inner membrane. It carries out the reaction UDP-N-acetyl-alpha-D-muramoyl-L-alanyl-gamma-D-glutamyl-meso-2,6-diaminopimeloyl-D-alanyl-D-alanine + di-trans,octa-cis-undecaprenyl phosphate = di-trans,octa-cis-undecaprenyl diphospho-N-acetyl-alpha-D-muramoyl-L-alanyl-D-glutamyl-meso-2,6-diaminopimeloyl-D-alanyl-D-alanine + UMP. It participates in cell wall biogenesis; peptidoglycan biosynthesis. Catalyzes the initial step of the lipid cycle reactions in the biosynthesis of the cell wall peptidoglycan: transfers peptidoglycan precursor phospho-MurNAc-pentapeptide from UDP-MurNAc-pentapeptide onto the lipid carrier undecaprenyl phosphate, yielding undecaprenyl-pyrophosphoryl-MurNAc-pentapeptide, known as lipid I. This is Phospho-N-acetylmuramoyl-pentapeptide-transferase from Porphyromonas gingivalis (strain ATCC 33277 / DSM 20709 / CIP 103683 / JCM 12257 / NCTC 11834 / 2561).